The chain runs to 425 residues: Serine hydroxymethyltransferase (425 aa).

Residues Leu126 and 130–132 (GHL) each bind (6S)-5,6,7,8-tetrahydrofolate. Lys234 carries the post-translational modification N6-(pyridoxal phosphate)lysine.

The protein belongs to the SHMT family. In terms of assembly, homodimer. Requires pyridoxal 5'-phosphate as cofactor.

The protein localises to the cytoplasm. The enzyme catalyses (6R)-5,10-methylene-5,6,7,8-tetrahydrofolate + glycine + H2O = (6S)-5,6,7,8-tetrahydrofolate + L-serine. The protein operates within one-carbon metabolism; tetrahydrofolate interconversion. Its pathway is amino-acid biosynthesis; glycine biosynthesis; glycine from L-serine: step 1/1. Its function is as follows. Catalyzes the reversible interconversion of serine and glycine with tetrahydrofolate (THF) serving as the one-carbon carrier. This reaction serves as the major source of one-carbon groups required for the biosynthesis of purines, thymidylate, methionine, and other important biomolecules. Also exhibits THF-independent aldolase activity toward beta-hydroxyamino acids, producing glycine and aldehydes, via a retro-aldol mechanism. In Desulfotalea psychrophila (strain LSv54 / DSM 12343), this protein is Serine hydroxymethyltransferase.